Here is a 421-residue protein sequence, read N- to C-terminus: Gamma-glutamyl phosphate reductase (421 aa).

Belongs to the gamma-glutamyl phosphate reductase family.

It is found in the cytoplasm. It catalyses the reaction L-glutamate 5-semialdehyde + phosphate + NADP(+) = L-glutamyl 5-phosphate + NADPH + H(+). Its pathway is amino-acid biosynthesis; L-proline biosynthesis; L-glutamate 5-semialdehyde from L-glutamate: step 2/2. Catalyzes the NADPH-dependent reduction of L-glutamate 5-phosphate into L-glutamate 5-semialdehyde and phosphate. The product spontaneously undergoes cyclization to form 1-pyrroline-5-carboxylate. This Azotobacter vinelandii (strain DJ / ATCC BAA-1303) protein is Gamma-glutamyl phosphate reductase.